Here is a 254-residue protein sequence, read N- to C-terminus: Glutamate racemase (254 aa).

Substrate contacts are provided by residues 7 to 8 and 39 to 40; these read DS and YG. Catalysis depends on cysteine 70, which acts as the Proton donor/acceptor. Position 71–72 (71–72) interacts with substrate; it reads NT. Cysteine 178 (proton donor/acceptor) is an active-site residue. 179-180 contacts substrate; sequence TH.

Belongs to the aspartate/glutamate racemases family.

The catalysed reaction is L-glutamate = D-glutamate. Its pathway is cell wall biogenesis; peptidoglycan biosynthesis. Functionally, provides the (R)-glutamate required for cell wall biosynthesis. The chain is Glutamate racemase from Aquifex aeolicus (strain VF5).